The primary structure comprises 243 residues: MLLYLIYGPTCSGKTDIAIQIAQKTGWPVVALDRVQCCPQIATGSGRPLPSELQSTRRIYLDSRRLTKGIIDAEGAHRRLILEVDWQESEEGLILEGGSVSLLNCMAKSPYWKSGFQWHVKRLRLGDSDAFLARAKQRVTEMFAIREDRPSLLEELAELWNYPATRPILEDIDGYRCAIRFARKHDLAINQLPDIDAERQQDLIEAIAKEYLEHAIMQERDFPQWPEDGARQPVGPATLMRIQ.

The protein belongs to the isopentenyl transferase family.

It carries out the reaction dimethylallyl diphosphate + AMP = N(6)-(dimethylallyl)adenosine 5'-phosphate + diphosphate. Functionally, transfers dimethylallyl groups to AMP as part of the biosynthesis of cytokinin phytohormones. The polypeptide is Adenylate dimethylallyltransferase (tzs) (Rhizobium rhizogenes (Agrobacterium rhizogenes)).